Consider the following 417-residue polypeptide: NADH-quinone oxidoreductase subunit D (417 aa).

This sequence belongs to the complex I 49 kDa subunit family. NDH-1 is composed of 14 different subunits. Subunits NuoB, C, D, E, F, and G constitute the peripheral sector of the complex.

It localises to the cell inner membrane. The catalysed reaction is a quinone + NADH + 5 H(+)(in) = a quinol + NAD(+) + 4 H(+)(out). NDH-1 shuttles electrons from NADH, via FMN and iron-sulfur (Fe-S) centers, to quinones in the respiratory chain. The immediate electron acceptor for the enzyme in this species is believed to be ubiquinone. Couples the redox reaction to proton translocation (for every two electrons transferred, four hydrogen ions are translocated across the cytoplasmic membrane), and thus conserves the redox energy in a proton gradient. In Albidiferax ferrireducens (strain ATCC BAA-621 / DSM 15236 / T118) (Rhodoferax ferrireducens), this protein is NADH-quinone oxidoreductase subunit D.